The primary structure comprises 644 residues: 3D-(3,5/4)-trihydroxycyclohexane-1,2-dione hydrolase 1 (644 aa).

E65 serves as a coordination point for thiamine diphosphate. The tract at residues 442–522 (SLPGDLQRMW…INVLLFDNSG (81 aa)) is thiamine pyrophosphate binding. Mg(2+)-binding residues include D493 and N520.

Belongs to the TPP enzyme family. It depends on Mg(2+) as a cofactor. The cofactor is thiamine diphosphate.

It catalyses the reaction 3D-3,5/4-trihydroxycyclohexane-1,2-dione + H2O = 5-deoxy-D-glucuronate + H(+). Its pathway is polyol metabolism; myo-inositol degradation into acetyl-CoA; acetyl-CoA from myo-inositol: step 3/7. Functionally, involved in the cleavage of the C1-C2 bond of 3D-(3,5/4)-trihydroxycyclohexane-1,2-dione (THcHDO) to yield 5-deoxy-glucuronate (5DG). The sequence is that of 3D-(3,5/4)-trihydroxycyclohexane-1,2-dione hydrolase 1 from Bacillus cereus (strain ZK / E33L).